The following is a 464-amino-acid chain: 2-oxoadipate dioxygenase/decarboxylase (464 aa).

2-oxoadipate is bound by residues His70, Arg74, and His226. A Fe(2+)-binding site is contributed by His70. Residues His226 and Glu294 each contribute to the Fe(2+) site. Val402 is a 2-oxoadipate binding site.

This sequence belongs to the 2-oxoadipate dioxygenase/decarboxylase family. Fe(2+) is required as a cofactor.

The catalysed reaction is 2-oxoadipate + O2 = (R)-2-hydroxyglutarate + CO2. The protein operates within amino-acid degradation. Inhibited by EDTA. Functionally, catalyzes the decarboxylation and hydroxylation of 2-oxoadipate (2OA) to form D-2-hydroxyglutarate (D-2-HGA). Is specific for 2-oxoadipate. Is involved in a D-lysine catabolic pathway. The sequence is that of 2-oxoadipate dioxygenase/decarboxylase from Pseudomonas putida (strain ATCC 47054 / DSM 6125 / CFBP 8728 / NCIMB 11950 / KT2440).